The chain runs to 423 residues: Serine hydroxymethyltransferase (423 aa).

119 to 121 (GHI) is a binding site for (6S)-5,6,7,8-tetrahydrofolate. The residue at position 225 (lysine 225) is an N6-(pyridoxal phosphate)lysine.

Belongs to the SHMT family. In terms of assembly, homodimer. It depends on pyridoxal 5'-phosphate as a cofactor.

It is found in the cytoplasm. It catalyses the reaction (6R)-5,10-methylene-5,6,7,8-tetrahydrofolate + glycine + H2O = (6S)-5,6,7,8-tetrahydrofolate + L-serine. It participates in one-carbon metabolism; tetrahydrofolate interconversion. Its pathway is amino-acid biosynthesis; glycine biosynthesis; glycine from L-serine: step 1/1. Catalyzes the reversible interconversion of serine and glycine with tetrahydrofolate (THF) serving as the one-carbon carrier. Also exhibits THF-independent aldolase activity toward beta-hydroxyamino acids, producing glycine and aldehydes, via a retro-aldol mechanism. The chain is Serine hydroxymethyltransferase from Methanocella arvoryzae (strain DSM 22066 / NBRC 105507 / MRE50).